The following is a 229-amino-acid chain: MLYAFTLGRKLRGEEPSYPEKGGKGGADKSAKYAAEAQKYAADLQNQQFNTIMNNLKPFTPLADKYIGSLEGLSSLEGQGQALNNYYNSQQYQDLAGQARYQNLAAAEATGGLGSTATSNQLSAIAPTLGQQWLSGQMNNYQNLANIGLGALQGQANAGQTYANNMSQISQQSAALAAANANRPSAMQSAIGGGASGAIAGAGLAKLIGSSTPWGAAIGGGIGLLGSLF.

Residues 1-20 constitute a propeptide, removed in mature form; that stretch reads MLYAFTLGRKLRGEEPSYPE.

It belongs to the podoviruses gp7 family. As to quaternary structure, interacts with the internal virion protein gp20; this interaction forms a tube-like structure that may allow DNA ejection through the host membranes.

Its subcellular location is the virion. In terms of biological role, inner capsid protein that plays a role in viral DNA ejection into the host cell. Assembles into an extracellular trans-envelope channel completed by the internal virion proteins gp7 and probably gp16. This channel allows the delivery of the viral genome into the cell cytoplasm. Displays membrane-association properties, may therefore form a simple channel spanning the outer membrane. This Salmonella phage P22 (Bacteriophage P22) protein is Internal virion protein gp7 (7).